The chain runs to 143 residues: UPF0201 protein Pcal_0593 (143 aa).

Belongs to the UPF0201 family.

The protein is UPF0201 protein Pcal_0593 of Pyrobaculum calidifontis (strain DSM 21063 / JCM 11548 / VA1).